The chain runs to 501 residues: Bifunctional purine biosynthesis protein PurH (501 aa).

The 144-residue stretch at 1–144 (MKKRALISVF…KNFKDVVVLS (144 aa)) folds into the MGS-like domain.

It belongs to the PurH family.

It carries out the reaction (6R)-10-formyltetrahydrofolate + 5-amino-1-(5-phospho-beta-D-ribosyl)imidazole-4-carboxamide = 5-formamido-1-(5-phospho-D-ribosyl)imidazole-4-carboxamide + (6S)-5,6,7,8-tetrahydrofolate. The catalysed reaction is IMP + H2O = 5-formamido-1-(5-phospho-D-ribosyl)imidazole-4-carboxamide. The protein operates within purine metabolism; IMP biosynthesis via de novo pathway; 5-formamido-1-(5-phospho-D-ribosyl)imidazole-4-carboxamide from 5-amino-1-(5-phospho-D-ribosyl)imidazole-4-carboxamide (10-formyl THF route): step 1/1. Its pathway is purine metabolism; IMP biosynthesis via de novo pathway; IMP from 5-formamido-1-(5-phospho-D-ribosyl)imidazole-4-carboxamide: step 1/1. The chain is Bifunctional purine biosynthesis protein PurH from Clostridium perfringens (strain SM101 / Type A).